The sequence spans 196 residues: Imidazoleglycerol-phosphate dehydratase (196 aa).

The protein belongs to the imidazoleglycerol-phosphate dehydratase family.

The protein localises to the cytoplasm. It carries out the reaction D-erythro-1-(imidazol-4-yl)glycerol 3-phosphate = 3-(imidazol-4-yl)-2-oxopropyl phosphate + H2O. Its pathway is amino-acid biosynthesis; L-histidine biosynthesis; L-histidine from 5-phospho-alpha-D-ribose 1-diphosphate: step 6/9. In Acidiphilium cryptum (strain JF-5), this protein is Imidazoleglycerol-phosphate dehydratase.